The sequence spans 261 residues: Cobalt transport protein CbiM (261 aa).

The N-terminal stretch at Met-1–Ala-33 is a signal peptide. Helical transmembrane passes span Leu-41 to Val-61, Leu-76 to Val-96, Leu-108 to Phe-128, Thr-140 to Tyr-160, Ile-172 to Gln-192, Phe-197 to Ile-217, and Ile-220 to Tyr-240.

This sequence belongs to the CbiM family. As to quaternary structure, forms an energy-coupling factor (ECF) transporter complex composed of an ATP-binding protein (A component, CbiO), a transmembrane protein (T component, CbiQ) and 2 possible substrate-capture proteins (S components, CbiM and CbiN) of unknown stoichimetry.

Its subcellular location is the cell inner membrane. It participates in cofactor biosynthesis; adenosylcobalamin biosynthesis. Part of the energy-coupling factor (ECF) transporter complex CbiMNOQ involved in cobalt import. The protein is Cobalt transport protein CbiM of Nostoc sp. (strain PCC 7120 / SAG 25.82 / UTEX 2576).